The following is a 325-amino-acid chain: BTB/POZ domain-containing protein KCTD12 (325 aa).

Residues 1–28 (MALADSTRGLPNGGGGGGGSGSSSSSAE) are disordered. Ala2 is modified (N-acetylalanine). Residues 11–21 (PNGGGGGGGSG) show a composition bias toward gly residues. Tyr119 carries the phosphotyrosine modification. The segment at 129-202 (LGAPQQPGPG…PLLTPSQSLD (74 aa)) is disordered. 3 positions are modified to phosphoserine: Ser151, Ser171, and Ser185. Position 196 is a phosphothreonine (Thr196). At Ser200 the chain carries Phosphoserine.

In terms of assembly, interacts as a tetramer with GABBR1 and GABBR2. As to expression, present in a variety of fetal organs, with highest expression levels in the cochlea and brain and, in stark contrast, is detected only at extremely low levels in adult organs, such as brain and lung.

The protein resides in the presynaptic cell membrane. It localises to the postsynaptic cell membrane. Functionally, auxiliary subunit of GABA-B receptors that determine the pharmacology and kinetics of the receptor response. Increases agonist potency and markedly alter the G-protein signaling of the receptors by accelerating onset and promoting desensitization. The protein is BTB/POZ domain-containing protein KCTD12 (KCTD12) of Homo sapiens (Human).